A 473-amino-acid chain; its full sequence is Probable lipid II flippase MurJ (473 aa).

13 helical membrane passes run 31–51 (TFGASSTLDAYYVSIVFPFFL), 90–110 (LVTLLIVFLSEVFPYFMASIF), 125–145 (LIRLTAPFITIVFVWAVFYSV), 153–173 (FLPALTPMFSNVGVIVGCLFG), 177–197 (WAAAGFTIGGLAALLVLLPFG), 215–235 (FFGTFMTMAVSQVTTLIDVNV), 253–273 (LYQLPLGIFGVAVSTVALSTL), 300–320 (IGLMALSERIISLLFGYGAFT), 327–347 (SAQILFMYAIGLCFVSLFNLL), 360–380 (PFFATLLVSAVNISLDVILGF), 382–402 (MGASGIALATSVSYIAGFVFL), 414–434 (IFKISLASAVMGTVILLLRGS), and 439–459 (LGTIFLVLIGVFVYVLFSKLL).

This sequence belongs to the MurJ/MviN family.

The protein resides in the cell inner membrane. It functions in the pathway cell wall biogenesis; peptidoglycan biosynthesis. Its function is as follows. Involved in peptidoglycan biosynthesis. Transports lipid-linked peptidoglycan precursors from the inner to the outer leaflet of the cytoplasmic membrane. This is Probable lipid II flippase MurJ from Thermotoga maritima (strain ATCC 43589 / DSM 3109 / JCM 10099 / NBRC 100826 / MSB8).